The following is a 486-amino-acid chain: Arginine deiminase (486 aa).

Catalysis depends on C476, which acts as the Amidino-cysteine intermediate.

This sequence belongs to the arginine deiminase family.

It localises to the cytoplasm. The enzyme catalyses L-arginine + H2O = L-citrulline + NH4(+). Its pathway is amino-acid degradation; L-arginine degradation via ADI pathway; carbamoyl phosphate from L-arginine: step 1/2. Functionally, involved in the arginine deiminase pathway of fermentative arginine utilization. This Halobacterium salinarum (strain ATCC 29341 / DSM 671 / R1) protein is Arginine deiminase (arcA).